The primary structure comprises 387 residues: MSVIKMTDLDLAGKRVLIRADLNVPVKEGKVTSDARIRASLPTIEAALKQGAKVMVTSHLGRPTEGEYNEEFSLLPVVNYLKEKLGAENVSLAKDYLDGVELAAGKLVVLENVRFNKGEKKDDETLSKKYAALCDIFVMDAFGTAHRAQASTHGVGKFAPVACAGPLLSAELEALGKALKSPARPMVAVVGGSKVSTKFDVLNSLVKIADTVIVGGGIANTFVAIENNVGKSLYEPDFVDAAKKLRDEYGIPVPVDSRVGTEFSETAPSTVKKVSEVQDNEEIMDFGDETALAMANLLKDAKTILWNGPVGVFEFPNFRKGTEIVANAIADSDAFSIAGGGDTLAAIDLFGIEDKISYISTGGGAFLEFVEGKVLPAVAMLEERAKQ.

Residues 21–23 (DLN), Arg-36, 59–62 (HLGR), Arg-114, and Arg-147 each bind substrate. ATP contacts are provided by residues Lys-198, Glu-314, and 340–343 (GGDT).

It belongs to the phosphoglycerate kinase family. In terms of assembly, monomer.

The protein localises to the cytoplasm. The enzyme catalyses (2R)-3-phosphoglycerate + ATP = (2R)-3-phospho-glyceroyl phosphate + ADP. It functions in the pathway carbohydrate degradation; glycolysis; pyruvate from D-glyceraldehyde 3-phosphate: step 2/5. The protein is Phosphoglycerate kinase of Erwinia tasmaniensis (strain DSM 17950 / CFBP 7177 / CIP 109463 / NCPPB 4357 / Et1/99).